The chain runs to 122 residues: Large ribosomal subunit protein uL14 (122 aa).

Belongs to the universal ribosomal protein uL14 family. Part of the 50S ribosomal subunit. Forms a cluster with proteins L3 and L19. In the 70S ribosome, L14 and L19 interact and together make contacts with the 16S rRNA in bridges B5 and B8.

Its function is as follows. Binds to 23S rRNA. Forms part of two intersubunit bridges in the 70S ribosome. The chain is Large ribosomal subunit protein uL14 from Agathobacter rectalis (strain ATCC 33656 / DSM 3377 / JCM 17463 / KCTC 5835 / VPI 0990) (Eubacterium rectale).